A 142-amino-acid chain; its full sequence is Large ribosomal subunit protein uL16 (142 aa).

It belongs to the universal ribosomal protein uL16 family. As to quaternary structure, part of the 50S ribosomal subunit.

Binds 23S rRNA and is also seen to make contacts with the A and possibly P site tRNAs. The chain is Large ribosomal subunit protein uL16 from Thermotoga neapolitana (strain ATCC 49049 / DSM 4359 / NBRC 107923 / NS-E).